Consider the following 1079-residue polypeptide: Electrogenic sodium bicarbonate cotransporter 1 (1079 aa).

A required for interaction with AHCYL1 region spans residues 1-62 (MEDEAVLDRG…EKKEKERISE (62 aa)). Topologically, residues 1–466 (MEDEAVLDRG…FASDFYDALN (466 aa)) are cytoplasmic. Residue Glu21 is modified to Phosphoserine. At Tyr30 the chain carries Phosphotyrosine. Basic residues predominate over residues 39–52 (YRRRRRHKRKAGHK). A disordered region spans residues 39-78 (YRRRRRHKRKAGHKEKKEKERISENYSDKSDVENADESSS). Positions 53 to 70 (EKKEKERISENYSDKSDV) are enriched in basic and acidic residues. Phosphoserine is present on residues Ser61, Ser65, Ser68, Ser223, Ser232, Ser233, and Ser245. The tract at residues 235 to 266 (SRMFSNPDNGSPAMTHRNLTSSSLNDISDKPE) is disordered. Residues Thr249 and Thr254 each carry the phosphothreonine modification. Residues 251–260 (RNLTSSSLND) show a composition bias toward polar residues. 3 positions are modified to phosphoserine: Ser256, Ser257, and Ser262. The chain crosses the membrane as a helical span at residues 467–491 (IQALSAILFIYLATVTNAITFGGLL). Residues 492-501 (GDATDNMQGV) are Extracellular-facing. A helical membrane pass occupies residues 502–520 (LESFLGTAVSGAIFCLFAG). Residue Gln521 is a topological domain, cytoplasmic. The chain crosses the membrane as a discontinuously helical span at residues 522-542 (PLTILSSTGPVLVFERLLFNF). Over 543–550 (SKDHNFDY) the chain is Extracellular. Residues 551–571 (LEFRLWIGLWSAFMCLVLVAT) traverse the membrane as a helical segment. At 572–585 (DASFLVQYFTRFTE) the chain is on the cytoplasmic side. The chain crosses the membrane as a helical span at residues 586–609 (EGFSSLISFIFIYDAFKKMIKLAD). The Extracellular segment spans residues 610 to 692 (YYPINSDFKV…GNNCDFVPDI (83 aa)). The chain crosses the membrane as a helical span at residues 693 to 710 (TLMSFILFLGTYTSSMAM). Residues 711 to 725 (KKFKTSRYFPTTARK) lie on the Cytoplasmic side of the membrane. The helical transmembrane segment at 726–745 (LISDFAIILSILIFCVIDAL) threads the bilayer. At 746–779 (VGVDTPKLIVPSEFKPTSPNRGWFVPPFGGNPWW) the chain is on the extracellular side. The interaction with CA4 stretch occupies residues 748 to 779 (VDTPKLIVPSEFKPTSPNRGWFVPPFGGNPWW). A helical membrane pass occupies residues 780–807 (VCLAAAIPALLVTILIFMDQQITAVIVN). Residues 808–819 (RKEHKLKKGAGY) are Cytoplasmic-facing. A helical membrane pass occupies residues 820–836 (HLDLFWVAILMVVCSFM). A topological domain (extracellular) is located at residue Ala837. Residues 838–855 (LPWYVAATVISIAHIDSL) traverse the membrane as a discontinuously helical segment. Over 856-877 (KMETETSAPGEQPKFLGVREQR) the chain is Cytoplasmic. A helical membrane pass occupies residues 878 to 894 (VTGTLVFILTGLSVFMA). At 895–901 (PILKFIP) the chain is on the extracellular side. The helical transmembrane segment at 902–918 (MPVLYGVFLYMGVASLN) threads the bilayer. Residues 919 to 960 (GVQFMDRLKLLLMPLKHQPDFIYLRHVPLRRVHLFTFLQVLC) are Cytoplasmic-facing. An intramembrane region (discontinuously helical) is located at residues 961-986 (LALLWILKSTVAAIIFPVMILALVAV). The Cytoplasmic portion of the chain corresponds to 987 to 1079 (RKGMDYLFSQ…STFLERHTSC (93 aa)). Residues 1002–1004 (LDD) form a CA2-binding region. Residues 1012-1079 (KKKEDEKKKK…STFLERHTSC (68 aa)) form a disordered region. A phosphoserine mark is found at Ser1026 and Ser1029. The CA2-binding stretch occupies residues 1030-1033 (DNDD). Phosphoserine is present on residues Ser1034 and Ser1044. The required for basolateral targeting stretch occupies residues 1057-1059 (FLS). Positions 1062–1079 (KPLDRERSSTFLERHTSC) are enriched in basic and acidic residues. At Ser1069 the chain carries Phosphoserine.

Belongs to the anion exchanger (TC 2.A.31) family. Homodimer. Interacts with CA2/carbonic anhydrase 2 and CA4/carbonic anhydrase 4 which may regulate transporter activity. Isoform 1 but not isoform 2 interacts with AHCYL1 (via PEST domain when phosphorylated); the interaction increases SLC4A4 isoform 1 activity. Interacts with AHCYL2. Post-translationally, phosphorylation of Ser-1026 by PKA increases the binding of CA2 and changes the Na(+):HCO3(-) stoichiometry of the transporter from 3:1 to 2:1. Phosphorylated in presence of STK39 and dephosphorylated in presence of PP1 phosphatase; phosphorylation seems to inhibit SLC4A4 activity. N-glycosylated. May not be necessary for the transporter basic functions. In terms of tissue distribution, isoform 1 is specifically expressed in pancreatic ducts and acini. Also expressed in parotid acinar cells and in the colonic crypts.

The protein localises to the basolateral cell membrane. Its subcellular location is the cell membrane. The catalysed reaction is 2 hydrogencarbonate(out) + Na(+)(out) = 2 hydrogencarbonate(in) + Na(+)(in). It carries out the reaction 3 hydrogencarbonate(out) + Na(+)(out) = 3 hydrogencarbonate(in) + Na(+)(in). Its activity is regulated as follows. Activated by cyclic AMP. In terms of biological role, electrogenic sodium/bicarbonate cotransporter with a Na(+):HCO3(-) stoichiometry varying from 1:2 to 1:3. May regulate bicarbonate influx/efflux at the basolateral membrane of cells and regulate intracellular pH. The polypeptide is Electrogenic sodium bicarbonate cotransporter 1 (Slc4a4) (Mus musculus (Mouse)).